We begin with the raw amino-acid sequence, 800 residues long: Ent-copalyl diphosphate synthase 2 (800 aa).

The segment at 52 to 80 (QGQETRERRQLDDDEHARPPQGGDDDVAA) is disordered. A compositionally biased stretch (basic and acidic residues) spans 55-69 (ETRERRQLDDDEHAR). Lys242 contributes to the substrate binding site. Residues Asp374 and Asp376 each contribute to the Mg(2+) site. A DXDD motif motif is present at residues 374-377 (DIDD). Residue Lys461 coordinates substrate.

This sequence belongs to the terpene synthase family. The cofactor is Mg(2+).

The enzyme catalyses (2E,6E,10E)-geranylgeranyl diphosphate = ent-copalyl diphosphate. Its function is as follows. Catalyzes the conversion of geranylgeranyl diphosphate to the phytoalexin precursor ent-copalyl diphosphate. In Oryza sativa subsp. indica (Rice), this protein is Ent-copalyl diphosphate synthase 2 (CPS2).